Here is a 323-residue protein sequence, read N- to C-terminus: tRNA U34 carboxymethyltransferase (323 aa).

Residues lysine 91, tryptophan 105, lysine 110, glycine 130, 152–154, 181–182, methionine 196, tyrosine 200, and arginine 315 contribute to the carboxy-S-adenosyl-L-methionine site; these read DPT and IE.

It belongs to the class I-like SAM-binding methyltransferase superfamily. CmoB family. Homotetramer.

It catalyses the reaction carboxy-S-adenosyl-L-methionine + 5-hydroxyuridine(34) in tRNA = 5-carboxymethoxyuridine(34) in tRNA + S-adenosyl-L-homocysteine + H(+). Catalyzes carboxymethyl transfer from carboxy-S-adenosyl-L-methionine (Cx-SAM) to 5-hydroxyuridine (ho5U) to form 5-carboxymethoxyuridine (cmo5U) at position 34 in tRNAs. The sequence is that of tRNA U34 carboxymethyltransferase from Shigella flexneri serotype 5b (strain 8401).